Consider the following 79-residue polypeptide: Protein S100-G (79 aa).

The residue at position 2 (Ser2) is an N-acetylserine. EF-hand domains lie at Ile13–Asn48 and Lys45–Gln79. Ca(2+)-binding residues include Gln26 and Glu31. A Phosphoserine modification is found at Ser42. Ca(2+) contacts are provided by Asp58, Asn60, Asp62, Glu64, and Glu69.

Belongs to the S-100 family.

This Homo sapiens (Human) protein is Protein S100-G (S100G).